The primary structure comprises 434 residues: Histidinol dehydrogenase (434 aa).

NAD(+)-binding residues include Tyr130, Gln188, and Asn211. Substrate is bound by residues Ser237, Gln259, and His262. 2 residues coordinate Zn(2+): Gln259 and His262. Active-site proton acceptor residues include Glu326 and His327. Residues His327, Asp360, Glu414, and His419 each contribute to the substrate site. Zn(2+) is bound at residue Asp360. His419 is a Zn(2+) binding site.

Belongs to the histidinol dehydrogenase family. Homodimer. The cofactor is Zn(2+).

It carries out the reaction L-histidinol + 2 NAD(+) + H2O = L-histidine + 2 NADH + 3 H(+). The protein operates within amino-acid biosynthesis; L-histidine biosynthesis; L-histidine from 5-phospho-alpha-D-ribose 1-diphosphate: step 9/9. Catalyzes the sequential NAD-dependent oxidations of L-histidinol to L-histidinaldehyde and then to L-histidine. The chain is Histidinol dehydrogenase from Escherichia coli O157:H7.